The following is a 195-amino-acid chain: Calcineurin B homologous protein 1 (195 aa).

Glycine 2 carries the N-myristoyl glycine lipid modification. The short motif at glycine 2–serine 6 is the Necessary for association with microtubule and interaction with GAPDH element. EF-hand domains are found at residues serine 26–proline 61, isoleucine 66–aspartate 101, serine 110–valine 145, and glutamine 151–glutamate 186. Positions 123, 125, 127, 129, and 134 each coordinate Ca(2+). The short motif at valine 138 to isoleucine 147 is the Nuclear export signal 1 element. A necessary for nuclear export signal region spans residues valine 143 to valine 185. Ca(2+)-binding residues include aspartate 164, aspartate 166, aspartate 168, and glutamate 175. Positions phenylalanine 176 to valine 185 match the Nuclear export signal 2 motif.

It belongs to the calcineurin regulatory subunit family. CHP subfamily. As to quaternary structure, monomer. Interacts with STK17B; the interaction occurs in a calcium-independent manner and induces the translocation of CHP1 from the Golgi to the nucleus. Interacts with GAPDH; the interaction is direct, occurs in a N-myristoylation-dependent manner and facilitates the ability of CHP1 to bind microtubules. Interacts with KIF1B (via the C-terminal end of the kinesin-motor domain); the interaction occurs in a calcium-dependent manner. Associates (via C-terminal domain) with microtubules; the association occurs with polymerized microtubules during the cell cycle in a myristoylation- and calcium-independent manner and is enhanced by GAPDH. Interacts with PPP3CA. Interacts with SLC9A1/NHE1 (via the C-terminal domain); the interaction occurs at the plasma membrane in a calcium-dependent manner and at a domain that is critical for growth factor stimulation of the exchanger. Interacts with SLC9A3; increases SLC9A3 trafficking and activity at the plasma membrane. Post-translationally, phosphorylated; decreased phosphorylation is associated with an increase in SLC9A1/NHE1 Na(+)/H(+) exchange activity. Phosphorylation occurs in serum-dependent manner. The phosphorylation state may regulate the binding to SLC9A1/NHE1. Both N-myristoylation and calcium-mediated conformational changes are essential for its function in exocytic traffic. N-myristoylation is required for its association with microtubules and interaction with GAPDH, but not for the constitutive association to membranes. In terms of tissue distribution, ubiquitously expressed. Has been found in fetal eye, lung, liver, muscle, heart, kidney, thymus and spleen.

The protein resides in the nucleus. It localises to the cytoplasm. It is found in the cytoskeleton. Its subcellular location is the endomembrane system. The protein localises to the endoplasmic reticulum-Golgi intermediate compartment. The protein resides in the endoplasmic reticulum. It localises to the cell membrane. It is found in the membrane. In terms of biological role, calcium-binding protein involved in different processes such as regulation of vesicular trafficking, plasma membrane Na(+)/H(+) exchanger and gene transcription. Involved in the constitutive exocytic membrane traffic. Mediates the association between microtubules and membrane-bound organelles of the endoplasmic reticulum and Golgi apparatus and is also required for the targeting and fusion of transcytotic vesicles (TCV) with the plasma membrane. Functions as an integral cofactor in cell pH regulation by controlling plasma membrane-type Na(+)/H(+) exchange activity. Affects the pH sensitivity of SLC9A1/NHE1 by increasing its sensitivity at acidic pH. Required for the stabilization and localization of SLC9A1/NHE1 at the plasma membrane. Inhibits serum- and GTPase-stimulated Na(+)/H(+) exchange. Plays a role as an inhibitor of ribosomal RNA transcription by repressing the nucleolar UBF1 transcriptional activity. May sequester UBF1 in the nucleoplasm and limit its translocation to the nucleolus. Associates to the ribosomal gene promoter. Acts as a negative regulator of the calcineurin/NFAT signaling pathway. Inhibits NFAT nuclear translocation and transcriptional activity by suppressing the calcium-dependent calcineurin phosphatase activity. Also negatively regulates the kinase activity of the apoptosis-induced kinase STK17B. Inhibits both STK17B auto- and substrate-phosphorylations in a calcium-dependent manner. This is Calcineurin B homologous protein 1 (CHP1) from Homo sapiens (Human).